The following is a 234-amino-acid chain: HTH-type transcriptional repressor FabR (234 aa).

Positions K29–L89 constitute an HTH tetR-type domain. The H-T-H motif DNA-binding region spans S52–F71.

Homodimer.

Its subcellular location is the cytoplasm. Its activity is regulated as follows. Has been suggested to require either an unsaturated acyl carrier protein or unsaturated acyl-CoA (but not their saturated equivalents) for DNA-binding. Another group suggests that unsaturated thioesters are not essential but act instead to enhance DNA-binding. Functionally, binds the promoter region of at least fabA and fabB, but probably not yqfA. Represses the transcription of fabA and fabB, involved in unsaturated fatty acid (UFA) biosynthesis. By controlling UFA production, FabR directly influences the physical properties of the membrane bilayer. The polypeptide is HTH-type transcriptional repressor FabR (Escherichia coli (strain K12)).